Reading from the N-terminus, the 31-residue chain is Cytochrome b6-f complex subunit 6 (31 aa).

A helical membrane pass occupies residues Ile-4–Gly-24.

Belongs to the PetL family. The 4 large subunits of the cytochrome b6-f complex are cytochrome b6, subunit IV (17 kDa polypeptide, PetD), cytochrome f and the Rieske protein, while the 4 small subunits are PetG, PetL, PetM and PetN. The complex functions as a dimer.

It localises to the plastid. It is found in the chloroplast thylakoid membrane. Component of the cytochrome b6-f complex, which mediates electron transfer between photosystem II (PSII) and photosystem I (PSI), cyclic electron flow around PSI, and state transitions. PetL is important for photoautotrophic growth as well as for electron transfer efficiency and stability of the cytochrome b6-f complex. The protein is Cytochrome b6-f complex subunit 6 of Cucumis sativus (Cucumber).